Reading from the N-terminus, the 372-residue chain is Queuine tRNA-ribosyltransferase (372 aa).

Catalysis depends on D93, which acts as the Proton acceptor. Residues 93–97 (DSGGF), D147, Q190, and G217 contribute to the substrate site. Positions 248-254 (GVGSPDC) are RNA binding. Catalysis depends on D267, which acts as the Nucleophile. The RNA binding; important for wobble base 34 recognition stretch occupies residues 272-276 (TRMAR). Residues C305, C307, C310, and H336 each contribute to the Zn(2+) site.

Belongs to the queuine tRNA-ribosyltransferase family. In terms of assembly, homodimer. Within each dimer, one monomer is responsible for RNA recognition and catalysis, while the other monomer binds to the replacement base PreQ1. It depends on Zn(2+) as a cofactor.

The enzyme catalyses 7-aminomethyl-7-carbaguanine + guanosine(34) in tRNA = 7-aminomethyl-7-carbaguanosine(34) in tRNA + guanine. The protein operates within tRNA modification; tRNA-queuosine biosynthesis. Functionally, catalyzes the base-exchange of a guanine (G) residue with the queuine precursor 7-aminomethyl-7-deazaguanine (PreQ1) at position 34 (anticodon wobble position) in tRNAs with GU(N) anticodons (tRNA-Asp, -Asn, -His and -Tyr). Catalysis occurs through a double-displacement mechanism. The nucleophile active site attacks the C1' of nucleotide 34 to detach the guanine base from the RNA, forming a covalent enzyme-RNA intermediate. The proton acceptor active site deprotonates the incoming PreQ1, allowing a nucleophilic attack on the C1' of the ribose to form the product. After dissociation, two additional enzymatic reactions on the tRNA convert PreQ1 to queuine (Q), resulting in the hypermodified nucleoside queuosine (7-(((4,5-cis-dihydroxy-2-cyclopenten-1-yl)amino)methyl)-7-deazaguanosine). This Desulforudis audaxviator (strain MP104C) protein is Queuine tRNA-ribosyltransferase.